The chain runs to 154 residues: uncharacterized protein (154 aa).

The protein localises to the mitochondrion. This is an uncharacterized protein from Marchantia polymorpha (Common liverwort).